The primary structure comprises 160 residues: UPF0178 protein PA14_69280 (160 aa).

Belongs to the UPF0178 family.

The polypeptide is UPF0178 protein PA14_69280 (Pseudomonas aeruginosa (strain UCBPP-PA14)).